Here is a 118-residue protein sequence, read N- to C-terminus: Secreted effector CSEP0064 (118 aa).

The signal sequence occupies residues Met-1–Ala-21. A disulfide bridge connects residues Cys-27 and Cys-113.

In terms of assembly, interacts in planta with the pathogenesis-related protein PR10.

The protein resides in the secreted. The protein localises to the host cell. In terms of biological role, secreted effector that increases susceptibility to infection in both monocotyledonous and dicotyledonous plants. Non-catalytic homolog of fungal RNases that binds host RNA and inhibits the degradation of host ribosomal RNA induced by ribosome-inactivating proteins (RIPs), preventing host cell death, an inviable interaction and demise of the fungus. This is Secreted effector CSEP0064 from Blumeria graminis f. sp. hordei (strain DH14) (Barley powdery mildew).